We begin with the raw amino-acid sequence, 78 residues long: Large ribosomal subunit protein bL28 (78 aa).

Positions 1-21 (MSRVCQVTGKRPVSGNNRSHA) are disordered.

This sequence belongs to the bacterial ribosomal protein bL28 family.

This chain is Large ribosomal subunit protein bL28, found in Serratia proteamaculans (strain 568).